Reading from the N-terminus, the 164-residue chain is UPF0478 protein SSP1024 (164 aa).

Residues Ile-7–Leu-27 form a helical membrane-spanning segment. The segment at Arg-136–Lys-164 is disordered. The span at Asn-143–Lys-164 shows a compositional bias: polar residues.

Belongs to the UPF0478 family.

It is found in the cell membrane. This Staphylococcus saprophyticus subsp. saprophyticus (strain ATCC 15305 / DSM 20229 / NCIMB 8711 / NCTC 7292 / S-41) protein is UPF0478 protein SSP1024.